A 396-amino-acid polypeptide reads, in one-letter code: Phosphoglycerate kinase (396 aa).

Substrate contacts are provided by residues D22 to N24, R37, H60 to R63, R118, and R151. Residues K201, E323, and G353–T356 contribute to the ATP site.

The protein belongs to the phosphoglycerate kinase family. Monomer.

Its subcellular location is the cytoplasm. The catalysed reaction is (2R)-3-phosphoglycerate + ATP = (2R)-3-phospho-glyceroyl phosphate + ADP. Its pathway is carbohydrate degradation; glycolysis; pyruvate from D-glyceraldehyde 3-phosphate: step 2/5. In Azorhizobium caulinodans (strain ATCC 43989 / DSM 5975 / JCM 20966 / LMG 6465 / NBRC 14845 / NCIMB 13405 / ORS 571), this protein is Phosphoglycerate kinase.